A 190-amino-acid polypeptide reads, in one-letter code: dITP/XTP pyrophosphatase (190 aa).

10 to 15 (TTNKHK) is a binding site for substrate. The Mg(2+) site is built by Glu-39 and Asp-68. Catalysis depends on Asp-68, which acts as the Proton acceptor. Residues Ala-69, 143 to 146 (FGYD), Lys-166, and 171 to 172 (HR) contribute to the substrate site.

It belongs to the HAM1 NTPase family. As to quaternary structure, homodimer. Mg(2+) is required as a cofactor.

It carries out the reaction XTP + H2O = XMP + diphosphate + H(+). The enzyme catalyses dITP + H2O = dIMP + diphosphate + H(+). It catalyses the reaction ITP + H2O = IMP + diphosphate + H(+). Pyrophosphatase that catalyzes the hydrolysis of nucleoside triphosphates to their monophosphate derivatives, with a high preference for the non-canonical purine nucleotides XTP (xanthosine triphosphate), dITP (deoxyinosine triphosphate) and ITP. Seems to function as a house-cleaning enzyme that removes non-canonical purine nucleotides from the nucleotide pool, thus preventing their incorporation into DNA/RNA and avoiding chromosomal lesions. The polypeptide is dITP/XTP pyrophosphatase (Hyperthermus butylicus (strain DSM 5456 / JCM 9403 / PLM1-5)).